A 364-amino-acid polypeptide reads, in one-letter code: Protein FAM81A (364 aa).

Coiled coils occupy residues 75–107, 158–189, and 261–287; these read FLEE…RDNI, NKEQ…VDLS, and ANER…QKRN. Positions 281–300 are disordered; it reads EESQKRNAEGQRKPDEEKVH.

It belongs to the FAM81 family. In terms of assembly, interacts with DLG4/PSD-95, GRIN2B/GLUN2B and SYNGAP1; the interactions facilitate condensate formation. As to expression, expressed in most regions of the brain (at protein level).

It is found in the postsynaptic density. Its subcellular location is the cytoplasm. Facilitates the interaction and assembly of proteins within the postsynaptic density by promoting the condensation of postsynaptic proteins via liquid-liquid phase separation. Required for neuronal activity. Accumulation at the postsynaptic density results in enlargement of dendritic spines. In Mus musculus (Mouse), this protein is Protein FAM81A (Fam81a).